Reading from the N-terminus, the 416-residue chain is Isocitrate dehydrogenase [NADP] (416 aa).

Residues 77–79 (TIT) and Arg-84 each bind NADP(+). Thr-79 lines the substrate pocket. Substrate is bound by residues 96–102 (SPNGTIR), Arg-111, and Arg-134. Asp-254 is a binding site for Mn(2+). Lys-262 is an NADP(+) binding site. Asp-277 contacts Mn(2+). NADP(+)-binding positions include 312–317 (GTVTRH) and Asn-330.

It belongs to the isocitrate and isopropylmalate dehydrogenases family. In terms of assembly, heterodimer. Requires Mg(2+) as cofactor. It depends on Mn(2+) as a cofactor.

It is found in the cytoplasm. The catalysed reaction is D-threo-isocitrate + NADP(+) = 2-oxoglutarate + CO2 + NADPH. In terms of biological role, may supply 2-oxoglutarate for amino acid biosynthesis and ammonia assimilation via the glutamine synthetase/glutamate synthase (GS/GOGAT) pathway. This Solanum tuberosum (Potato) protein is Isocitrate dehydrogenase [NADP] (ICDH-1).